Consider the following 219-residue polypeptide: UPF0502 protein Gura_0277 (219 aa).

Belongs to the UPF0502 family.

The protein is UPF0502 protein Gura_0277 of Geotalea uraniireducens (strain Rf4) (Geobacter uraniireducens).